The following is an 88-amino-acid chain: Small ribosomal subunit protein bS20 (88 aa).

Residues 1–25 (MANTPSAKKAARKIERRTAVNRARR) form a disordered region.

The protein belongs to the bacterial ribosomal protein bS20 family.

In terms of biological role, binds directly to 16S ribosomal RNA. This Azorhizobium caulinodans (strain ATCC 43989 / DSM 5975 / JCM 20966 / LMG 6465 / NBRC 14845 / NCIMB 13405 / ORS 571) protein is Small ribosomal subunit protein bS20.